The primary structure comprises 305 residues: Methionyl-tRNA formyltransferase (305 aa).

111–114 is a (6S)-5,6,7,8-tetrahydrofolate binding site; the sequence is SLLP.

Belongs to the Fmt family.

The enzyme catalyses L-methionyl-tRNA(fMet) + (6R)-10-formyltetrahydrofolate = N-formyl-L-methionyl-tRNA(fMet) + (6S)-5,6,7,8-tetrahydrofolate + H(+). Attaches a formyl group to the free amino group of methionyl-tRNA(fMet). The formyl group appears to play a dual role in the initiator identity of N-formylmethionyl-tRNA by promoting its recognition by IF2 and preventing the misappropriation of this tRNA by the elongation apparatus. The chain is Methionyl-tRNA formyltransferase from Campylobacter jejuni subsp. jejuni serotype O:2 (strain ATCC 700819 / NCTC 11168).